Here is a 129-residue protein sequence, read N- to C-terminus: Small ribosomal subunit protein uS8 (129 aa).

This sequence belongs to the universal ribosomal protein uS8 family. Part of the 30S ribosomal subunit. Contacts proteins S5 and S12.

One of the primary rRNA binding proteins, it binds directly to 16S rRNA central domain where it helps coordinate assembly of the platform of the 30S subunit. In Mycoplasma mycoides subsp. mycoides SC (strain CCUG 32753 / NCTC 10114 / PG1), this protein is Small ribosomal subunit protein uS8.